We begin with the raw amino-acid sequence, 317 residues long: Methionyl-tRNA formyltransferase (317 aa).

Serine 112–proline 115 is a (6S)-5,6,7,8-tetrahydrofolate binding site.

This sequence belongs to the Fmt family.

It carries out the reaction L-methionyl-tRNA(fMet) + (6R)-10-formyltetrahydrofolate = N-formyl-L-methionyl-tRNA(fMet) + (6S)-5,6,7,8-tetrahydrofolate + H(+). Its function is as follows. Attaches a formyl group to the free amino group of methionyl-tRNA(fMet). The formyl group appears to play a dual role in the initiator identity of N-formylmethionyl-tRNA by promoting its recognition by IF2 and preventing the misappropriation of this tRNA by the elongation apparatus. The chain is Methionyl-tRNA formyltransferase from Geobacter sulfurreducens (strain ATCC 51573 / DSM 12127 / PCA).